Here is a 426-residue protein sequence, read N- to C-terminus: Histidine--tRNA ligase (426 aa).

It belongs to the class-II aminoacyl-tRNA synthetase family. As to quaternary structure, homodimer.

Its subcellular location is the cytoplasm. It carries out the reaction tRNA(His) + L-histidine + ATP = L-histidyl-tRNA(His) + AMP + diphosphate + H(+). In Pseudoalteromonas atlantica (strain T6c / ATCC BAA-1087), this protein is Histidine--tRNA ligase.